The following is a 599-amino-acid chain: Sulfite reductase [NADPH] flavoprotein alpha-component (599 aa).

One can recognise a Flavodoxin-like domain in the interval 64-202; the sequence is ITIISASQTG…AASEWRARVV (139 aa). FMN is bound by residues 70 to 75, 117 to 120, and 153 to 162; these read SQTGNA, STQG, and LGDSSYEFFC. One can recognise an FAD-binding FR-type domain in the interval 234 to 448; sequence DAPLAASLSV…IEHNDNFRLP (215 aa). FAD contacts are provided by residues Thr322, Ala356, 386-389, 404-406, Tyr410, and 419-422; these read RLYS, TVG, and GGAS. Residues 519–520, 525–529, and Asp561 contribute to the NADP(+) site; these read SR and KIYVQ. Tyr599 is an FAD binding site.

This sequence belongs to the NADPH-dependent sulphite reductase flavoprotein subunit CysJ family. In the N-terminal section; belongs to the flavodoxin family. The protein in the C-terminal section; belongs to the flavoprotein pyridine nucleotide cytochrome reductase family. Alpha(8)-beta(8). The alpha component is a flavoprotein, the beta component is a hemoprotein. FAD serves as cofactor. It depends on FMN as a cofactor.

It carries out the reaction hydrogen sulfide + 3 NADP(+) + 3 H2O = sulfite + 3 NADPH + 4 H(+). It participates in sulfur metabolism; hydrogen sulfide biosynthesis; hydrogen sulfide from sulfite (NADPH route): step 1/1. In terms of biological role, component of the sulfite reductase complex that catalyzes the 6-electron reduction of sulfite to sulfide. This is one of several activities required for the biosynthesis of L-cysteine from sulfate. The flavoprotein component catalyzes the electron flow from NADPH -&gt; FAD -&gt; FMN to the hemoprotein component. The protein is Sulfite reductase [NADPH] flavoprotein alpha-component of Escherichia coli O6:H1 (strain CFT073 / ATCC 700928 / UPEC).